Reading from the N-terminus, the 311-residue chain is Fluoride export protein 1 (311 aa).

The Cytoplasmic segment spans residues 1–6 (MLLTQS). Residues 7-25 (YFCIMSMLGTLARLGLTAL) traverse the membrane as a helical segment. Residues 26 to 29 (NTYP) are Extracellular-facing. The helical transmembrane segment at 30 to 50 (GAPFSGLLWVQFVGCVIMGFC) threads the bilayer. Residues 51 to 65 (QTESVFFPRPKHNAT) lie on the Cytoplasmic side of the membrane. Residues 66-86 (FLLAITTGFCGSLTTFSSWML) form a helical membrane-spanning segment. Over 87–106 (QMFTGMANLDPFERRGRGYS) the chain is Extracellular. A helical transmembrane segment spans residues 107-127 (FLSVVSDFMVTMCIAMSSLIW). At 128–154 (GKQIGKTTGQWRIGKVAFAWPIPAHTH) the chain is on the cytoplasmic side. A helical transmembrane segment spans residues 155 to 175 (IVVRVLLLLLSICFFVGAAFY). The Extracellular portion of the chain corresponds to 176-186 (TAYTTNVTHRG). N-linked (GlcNAc...) asparagine glycosylation is present at Asn181. A helical membrane pass occupies residues 187 to 207 (IGFSLIFSPFAALTRLYLARF). The Cytoplasmic portion of the chain corresponds to 208 to 212 (LNSPQ). A helical transmembrane segment spans residues 213–233 (YFIPYGTLCANVFATLLLSIM). Residues 234 to 250 (YMIPQITHCTPVSRSVM) are Extracellular-facing. A helical membrane pass occupies residues 251-268 (YGIQNGFCAVLSTLSTFS). Topologically, residues 269-278 (NELHTMPIKR) are cytoplasmic. The helical transmembrane segment at 279–299 (AYIYCIISVAISFSICVIVDG) threads the bilayer. Residues 300–311 (ATAWGHGYTEKY) lie on the Extracellular side of the membrane.

This sequence belongs to the fluoride channel Fluc/FEX (TC 1.A.43) family.

It is found in the cell membrane. It carries out the reaction fluoride(in) = fluoride(out). In terms of biological role, fluoride channel required for the rapid expulsion of cytoplasmic fluoride. This is Fluoride export protein 1 (fex1) from Schizosaccharomyces pombe (strain 972 / ATCC 24843) (Fission yeast).